Consider the following 432-residue polypeptide: Adenylosuccinate synthetase 1 (432 aa).

GTP-binding positions include glycine 12–arginine 18 and glycine 40–threonine 42. The active-site Proton acceptor is aspartate 13. Residues aspartate 13 and glycine 40 each contribute to the Mg(2+) site. Residues aspartate 13 to lysine 16, asparagine 38 to histidine 41, threonine 128, arginine 142, glutamine 222, threonine 237, and arginine 301 contribute to the IMP site. Histidine 41 functions as the Proton donor in the catalytic mechanism. Threonine 297 to arginine 303 is a binding site for substrate. GTP-binding positions include arginine 303, lysine 329–aspartate 331, and serine 411–glycine 413.

Belongs to the adenylosuccinate synthetase family. In terms of assembly, homodimer. Requires Mg(2+) as cofactor.

The protein resides in the cytoplasm. It carries out the reaction IMP + L-aspartate + GTP = N(6)-(1,2-dicarboxyethyl)-AMP + GDP + phosphate + 2 H(+). Its pathway is purine metabolism; AMP biosynthesis via de novo pathway; AMP from IMP: step 1/2. In terms of biological role, plays an important role in the de novo pathway of purine nucleotide biosynthesis. Catalyzes the first committed step in the biosynthesis of AMP from IMP. This Chromobacterium violaceum (strain ATCC 12472 / DSM 30191 / JCM 1249 / CCUG 213 / NBRC 12614 / NCIMB 9131 / NCTC 9757 / MK) protein is Adenylosuccinate synthetase 1.